Here is a 383-residue protein sequence, read N- to C-terminus: Lipid-A-disaccharide synthase (383 aa).

This sequence belongs to the LpxB family.

It catalyses the reaction 2-N,3-O-bis[(3R)-3-hydroxytetradecanoyl]-alpha-D-glucosaminyl 1-phosphate + UDP-2-N,3-O-bis[(3R)-3-hydroxytetradecanoyl]-alpha-D-glucosamine = lipid A disaccharide (E. coli) + UDP + H(+). It carries out the reaction a lipid X + a UDP-2-N,3-O-bis[(3R)-3-hydroxyacyl]-alpha-D-glucosamine = a lipid A disaccharide + UDP + H(+). It participates in glycolipid biosynthesis; lipid IV(A) biosynthesis; lipid IV(A) from (3R)-3-hydroxytetradecanoyl-[acyl-carrier-protein] and UDP-N-acetyl-alpha-D-glucosamine: step 5/6. Condensation of UDP-2,3-diacylglucosamine and 2,3-diacylglucosamine-1-phosphate to form lipid A disaccharide, a precursor of lipid A, a phosphorylated glycolipid that anchors the lipopolysaccharide to the outer membrane of the cell. This is Lipid-A-disaccharide synthase from Pectobacterium carotovorum subsp. carotovorum (strain PC1).